A 155-amino-acid polypeptide reads, in one-letter code: Ribosome maturation factor RimP (155 aa).

The protein belongs to the RimP family.

Its subcellular location is the cytoplasm. Functionally, required for maturation of 30S ribosomal subunits. The sequence is that of Ribosome maturation factor RimP from Gloeothece citriformis (strain PCC 7424) (Cyanothece sp. (strain PCC 7424)).